We begin with the raw amino-acid sequence, 256 residues long: Thiazole synthase (256 aa).

Lys-95 functions as the Schiff-base intermediate with DXP in the catalytic mechanism. 1-deoxy-D-xylulose 5-phosphate is bound by residues Gly-156, Ala-182–Gly-183, and Asn-204–Thr-205.

The protein belongs to the ThiG family. As to quaternary structure, homotetramer. Forms heterodimers with either ThiH or ThiS.

It localises to the cytoplasm. It catalyses the reaction [ThiS sulfur-carrier protein]-C-terminal-Gly-aminoethanethioate + 2-iminoacetate + 1-deoxy-D-xylulose 5-phosphate = [ThiS sulfur-carrier protein]-C-terminal Gly-Gly + 2-[(2R,5Z)-2-carboxy-4-methylthiazol-5(2H)-ylidene]ethyl phosphate + 2 H2O + H(+). Its pathway is cofactor biosynthesis; thiamine diphosphate biosynthesis. In terms of biological role, catalyzes the rearrangement of 1-deoxy-D-xylulose 5-phosphate (DXP) to produce the thiazole phosphate moiety of thiamine. Sulfur is provided by the thiocarboxylate moiety of the carrier protein ThiS. In vitro, sulfur can be provided by H(2)S. The chain is Thiazole synthase from Escherichia coli O81 (strain ED1a).